A 903-amino-acid chain; its full sequence is Dual 3',5'-cyclic-AMP and -GMP phosphodiesterase 11A (903 aa).

2 GAF domains span residues 175 to 324 (DLTS…GIAI) and 356 to 512 (DLEK…GLGI). Ser-378 contributes to the 3',5'-cyclic GMP binding site. The region spanning 542 to 866 (SKTEVDKFKA…VKWEELDKKR (325 aa)) is the PDEase domain. Catalysis depends on His-618, which acts as the Proton donor. Residues His-622, His-658, Asp-659, and Asp-770 each contribute to the a divalent metal cation site. Residues 863–903 (DKKRQHDHGASVPASPCSAAEGSETGGVPCCSNNTPPTHVS) form a disordered region. Residues 893–903 (CSNNTPPTHVS) are compositionally biased toward polar residues.

This sequence belongs to the cyclic nucleotide phosphodiesterase family. The cofactor is a divalent metal cation.

The protein localises to the cytoplasm. Its subcellular location is the cytosol. The catalysed reaction is 3',5'-cyclic GMP + H2O = GMP + H(+). It catalyses the reaction 3',5'-cyclic AMP + H2O = AMP + H(+). In terms of biological role, plays a role in signal transduction by regulating the intracellular concentration of cyclic nucleotides cAMP and cGMP. Catalyzes the hydrolysis of both cAMP and cGMP to 5'-AMP and 5'-GMP, respectively. The protein is Dual 3',5'-cyclic-AMP and -GMP phosphodiesterase 11A (pde11a) of Takifugu rubripes (Japanese pufferfish).